The primary structure comprises 813 residues: UPF0508 protein KLLA0A06237g (813 aa).

Positions 478–537 are disordered; the sequence is KKDKSKSQKNSTDSLAKLSDTKSIHPPESAMSSHASTPSSTSKSSKSSKSSSTLSPSTCK. Positions 506-537 are enriched in low complexity; that stretch reads SAMSSHASTPSSTSKSSKSSKSSSTLSPSTCK.

The protein belongs to the UPF0508 family.

The polypeptide is UPF0508 protein KLLA0A06237g (Kluyveromyces lactis (strain ATCC 8585 / CBS 2359 / DSM 70799 / NBRC 1267 / NRRL Y-1140 / WM37) (Yeast)).